We begin with the raw amino-acid sequence, 145 residues long: QFDQETMTLHHDKHHATYVANANAALEKHPEIGENLEELLANVESIPADIRQALINNGGGHLNHALFWELLSPEKTEVTKEVASAIDQAFGSFDAFKEQFAAAATGRFGSGWAWLVVTKEGSLEITSTANQDTPISEGKKPILAL.

Fe(3+) is bound by residues H10 and H64. 2 residues coordinate Mn(2+): H10 and H64.

The protein belongs to the iron/manganese superoxide dismutase family. Mn(2+) serves as cofactor. The cofactor is Fe(3+).

It carries out the reaction 2 superoxide + 2 H(+) = H2O2 + O2. Functionally, destroys superoxide anion radicals which are normally produced within the cells and which are toxic to biological systems. Catalyzes the dismutation of superoxide anion radicals into O2 and H2O2 by successive reduction and oxidation of the transition metal ion at the active site. This Streptococcus iniae (Streptococcus shiloi) protein is Superoxide dismutase [Mn/Fe] (sodA).